The primary structure comprises 1056 residues: Carbamoyl phosphate synthase large chain (1056 aa).

The tract at residues 1-401 (MPKRTDIHKI…ALHKAVRSLE (401 aa)) is carboxyphosphate synthetic domain. Residues Arg129, Arg169, Gly175, Gly176, Lys208, Ile210, Glu215, Gly241, Ile242, His243, Gln284, and Glu298 each contribute to the ATP site. One can recognise an ATP-grasp 1 domain in the interval 133–327 (KELMNELGEP…IAKMAAKIAV (195 aa)). Mg(2+) contacts are provided by Gln284, Glu298, and Asn300. Mn(2+) is bound by residues Gln284, Glu298, and Asn300. The interval 402 to 546 (IDEKDLFSAE…YSAYDHENES (145 aa)) is oligomerization domain. Positions 547–929 (QRTKKPSILV…ALHKAFSGAH (383 aa)) are carbamoyl phosphate synthetic domain. The 191-residue stretch at 671–861 (DQVITDLNLK…MAQVATRVIL (191 aa)) folds into the ATP-grasp 2 domain. The ATP site is built by Arg707, Ala746, Leu748, Glu752, Gly777, Val778, His779, Ser780, Gln820, and Glu832. The Mg(2+) site is built by Gln820, Glu832, and Asn834. Mn(2+)-binding residues include Gln820, Glu832, and Asn834. Residues 930–1056 (IQVPNDGKIL…DQSLEAITIK (127 aa)) form the MGS-like domain. The allosteric domain stretch occupies residues 930-1056 (IQVPNDGKIL…DQSLEAITIK (127 aa)).

Belongs to the CarB family. As to quaternary structure, composed of two chains; the small (or glutamine) chain promotes the hydrolysis of glutamine to ammonia, which is used by the large (or ammonia) chain to synthesize carbamoyl phosphate. Tetramer of heterodimers (alpha,beta)4. Mg(2+) serves as cofactor. Requires Mn(2+) as cofactor.

It carries out the reaction hydrogencarbonate + L-glutamine + 2 ATP + H2O = carbamoyl phosphate + L-glutamate + 2 ADP + phosphate + 2 H(+). It catalyses the reaction hydrogencarbonate + NH4(+) + 2 ATP = carbamoyl phosphate + 2 ADP + phosphate + 2 H(+). The protein operates within amino-acid biosynthesis; L-arginine biosynthesis; carbamoyl phosphate from bicarbonate: step 1/1. It participates in pyrimidine metabolism; UMP biosynthesis via de novo pathway; (S)-dihydroorotate from bicarbonate: step 1/3. Its function is as follows. Large subunit of the glutamine-dependent carbamoyl phosphate synthetase (CPSase). CPSase catalyzes the formation of carbamoyl phosphate from the ammonia moiety of glutamine, carbonate, and phosphate donated by ATP, constituting the first step of 2 biosynthetic pathways, one leading to arginine and/or urea and the other to pyrimidine nucleotides. The large subunit (synthetase) binds the substrates ammonia (free or transferred from glutamine from the small subunit), hydrogencarbonate and ATP and carries out an ATP-coupled ligase reaction, activating hydrogencarbonate by forming carboxy phosphate which reacts with ammonia to form carbamoyl phosphate. The polypeptide is Carbamoyl phosphate synthase large chain (Limosilactobacillus reuteri (strain DSM 20016) (Lactobacillus reuteri)).